The following is a 460-amino-acid chain: Bifunctional protein GlmU (460 aa).

Positions 1-233 (MLDIVIMAAG…ETEVLGVNSP (233 aa)) are pyrophosphorylase. Residues Lys21, Gln76, and 81 to 82 (GT) each bind UDP-N-acetyl-alpha-D-glucosamine. Mg(2+) is bound at residue Asp105. Residues Gly140, Glu158, and Asn231 each contribute to the UDP-N-acetyl-alpha-D-glucosamine site. Asn231 lines the Mg(2+) pocket. The segment at 234–254 (LQLADLERRLQRKQAEALLEA) is linker. Residues 255–460 (GVRLADPARF…AGWQRPQKKR (206 aa)) form an N-acetyltransferase region. Residues Arg337 and Lys355 each contribute to the UDP-N-acetyl-alpha-D-glucosamine site. Catalysis depends on His367, which acts as the Proton acceptor. Positions 370 and 381 each coordinate UDP-N-acetyl-alpha-D-glucosamine. Residues Ala384, 390 to 391 (NY), Ser409, Gly427, and Arg444 each bind acetyl-CoA.

It in the N-terminal section; belongs to the N-acetylglucosamine-1-phosphate uridyltransferase family. The protein in the C-terminal section; belongs to the transferase hexapeptide repeat family. As to quaternary structure, homotrimer. It depends on Mg(2+) as a cofactor.

The protein localises to the cytoplasm. It carries out the reaction alpha-D-glucosamine 1-phosphate + acetyl-CoA = N-acetyl-alpha-D-glucosamine 1-phosphate + CoA + H(+). The catalysed reaction is N-acetyl-alpha-D-glucosamine 1-phosphate + UTP + H(+) = UDP-N-acetyl-alpha-D-glucosamine + diphosphate. The protein operates within nucleotide-sugar biosynthesis; UDP-N-acetyl-alpha-D-glucosamine biosynthesis; N-acetyl-alpha-D-glucosamine 1-phosphate from alpha-D-glucosamine 6-phosphate (route II): step 2/2. Its pathway is nucleotide-sugar biosynthesis; UDP-N-acetyl-alpha-D-glucosamine biosynthesis; UDP-N-acetyl-alpha-D-glucosamine from N-acetyl-alpha-D-glucosamine 1-phosphate: step 1/1. It functions in the pathway bacterial outer membrane biogenesis; LPS lipid A biosynthesis. Functionally, catalyzes the last two sequential reactions in the de novo biosynthetic pathway for UDP-N-acetylglucosamine (UDP-GlcNAc). The C-terminal domain catalyzes the transfer of acetyl group from acetyl coenzyme A to glucosamine-1-phosphate (GlcN-1-P) to produce N-acetylglucosamine-1-phosphate (GlcNAc-1-P), which is converted into UDP-GlcNAc by the transfer of uridine 5-monophosphate (from uridine 5-triphosphate), a reaction catalyzed by the N-terminal domain. This Methylibium petroleiphilum (strain ATCC BAA-1232 / LMG 22953 / PM1) protein is Bifunctional protein GlmU.